The chain runs to 296 residues: MRHRRRPGGRSTAGGTPVSQLSIPSPSIEAFHLGPLTIHIYALCILAGIVVAYISGGRRYQARGGKQEQFEELCALAVIAGIIGGRLYHVITDHQLYFGPGRTWYHCFFIWQGGLGIWGAISLGGLAIWLYCRRKGIRFASVADSLAPGILAAQAIGRLGNWFNQELFGRPTSLPWGLEIDLSHRPAGYLQYATFHPTFLYELVWSLVGAVFLLWVDRRWTLDHGRLFTLYVAIYTFGRFWVERLRIDPAHHVGQWRLNDVTALVVFTGAVVILIVLQRRYGKGDEHSSCPAHKTR.

The tract at residues 1-21 (MRHRRRPGGRSTAGGTPVSQL) is disordered. Helical transmembrane passes span 34 to 54 (GPLT…VAYI), 72 to 92 (ELCA…HVIT), 108 to 128 (FFIW…GLAI), 136 to 158 (GIRF…AIGR), 195 to 215 (FHPT…FLLW), 227 to 243 (LFTL…FWVE), and 258 to 278 (LNDV…IVLQ). An a 1,2-diacyl-sn-glycero-3-phospho-(1'-sn-glycerol)-binding site is contributed by Arg-158.

The protein belongs to the Lgt family.

Its subcellular location is the cell membrane. The catalysed reaction is L-cysteinyl-[prolipoprotein] + a 1,2-diacyl-sn-glycero-3-phospho-(1'-sn-glycerol) = an S-1,2-diacyl-sn-glyceryl-L-cysteinyl-[prolipoprotein] + sn-glycerol 1-phosphate + H(+). Its pathway is protein modification; lipoprotein biosynthesis (diacylglyceryl transfer). Catalyzes the transfer of the diacylglyceryl group from phosphatidylglycerol to the sulfhydryl group of the N-terminal cysteine of a prolipoprotein, the first step in the formation of mature lipoproteins. The protein is Phosphatidylglycerol--prolipoprotein diacylglyceryl transferase of Cutibacterium acnes (strain DSM 16379 / KPA171202) (Propionibacterium acnes).